Here is a 190-residue protein sequence, read N- to C-terminus: UPF0340 protein BCE33L5016 (190 aa).

This sequence belongs to the UPF0340 family.

In Bacillus cereus (strain ZK / E33L), this protein is UPF0340 protein BCE33L5016.